Reading from the N-terminus, the 100-residue chain is Proline-rich protein 15-like protein (100 aa).

The tract at residues 29 to 51 (YAQTEGGAEPPGPDAGDPHSDFN) is disordered.

The protein belongs to the PRR15 family.

The polypeptide is Proline-rich protein 15-like protein (Prr15l) (Mus musculus (Mouse)).